The sequence spans 87 residues: Phosphoribosyl-ATP pyrophosphatase (87 aa).

This sequence belongs to the PRA-PH family.

It is found in the cytoplasm. It carries out the reaction 1-(5-phospho-beta-D-ribosyl)-ATP + H2O = 1-(5-phospho-beta-D-ribosyl)-5'-AMP + diphosphate + H(+). Its pathway is amino-acid biosynthesis; L-histidine biosynthesis; L-histidine from 5-phospho-alpha-D-ribose 1-diphosphate: step 2/9. This is Phosphoribosyl-ATP pyrophosphatase from Bifidobacterium longum (strain DJO10A).